A 290-amino-acid polypeptide reads, in one-letter code: Nucleoid occlusion protein (290 aa).

The H-T-H motif DNA-binding region spans 153–172 (EALAQRLGKGQSTVANKLRL).

It belongs to the ParB family.

Its subcellular location is the cytoplasm. The protein resides in the nucleoid. Effects nucleoid occlusion by binding relatively nonspecifically to DNA and preventing the assembly of the division machinery in the vicinity of the nucleoid, especially under conditions that disturb the cell cycle. It helps to coordinate cell division and chromosome segregation by preventing the formation of the Z ring through the nucleoid, which would cause chromosome breakage. The polypeptide is Nucleoid occlusion protein (Bacillus mycoides (strain KBAB4) (Bacillus weihenstephanensis)).